Consider the following 294-residue polypeptide: UDP-3-O-acyl-N-acetylglucosamine deacetylase (294 aa).

His75, His232, and Asp236 together coordinate Zn(2+). His259 acts as the Proton donor in catalysis.

Belongs to the LpxC family. Zn(2+) is required as a cofactor.

The enzyme catalyses a UDP-3-O-[(3R)-3-hydroxyacyl]-N-acetyl-alpha-D-glucosamine + H2O = a UDP-3-O-[(3R)-3-hydroxyacyl]-alpha-D-glucosamine + acetate. It functions in the pathway glycolipid biosynthesis; lipid IV(A) biosynthesis; lipid IV(A) from (3R)-3-hydroxytetradecanoyl-[acyl-carrier-protein] and UDP-N-acetyl-alpha-D-glucosamine: step 2/6. Its function is as follows. Catalyzes the hydrolysis of UDP-3-O-myristoyl-N-acetylglucosamine to form UDP-3-O-myristoylglucosamine and acetate, the committed step in lipid A biosynthesis. This chain is UDP-3-O-acyl-N-acetylglucosamine deacetylase, found in Campylobacter jejuni subsp. jejuni serotype O:6 (strain 81116 / NCTC 11828).